The chain runs to 500 residues: MDSSSFIQFDVPEYSSTVLSQLNELRLQGKLCDIIVHIQGQPFRAHKAVLAASSPYFRDHSALSTMSGLSISVIKNPNVFEQLLSFCYTGRMSLQLKDVVSFLTAASFLQMQCVIDKCTQILESIHSKISVGDVDSVTVGAEENPESRNGVKDSSFFANPVEISPPYCSQGRQPTASSDLRMETTPSKALRSRLQEEGHSDRGSSGSVSEYEIQIEGDHEQGDLLVRESQITEVKVKMEKSDRPSCSDSSSLGDDGYHTEMVDGEQVVAVNVGSYGSVLQHAYSYSQAASQPTNVSEAFGSLSNSSPSRSMLSCFRGGRARQKRALSVHLHSDLQGLVQGSDSEAMMNNPGYESSPRERSARGHWYPYNERLICIYCGKSFNQKGSLDRHMRLHMGITPFVCKFCGKKYTRKDQLEYHIRGHTDDKPFRCEICGKCFPFQGTLNQHLRKNHPGVAEVRSRIESPERTDVYVEQKLENDASASEMGLDSRMEIHTVSDAPD.

The 65-residue stretch at 32–96 folds into the BTB domain; that stretch reads CDIIVHIQGQ…CYTGRMSLQL (65 aa). Phosphoserine is present on Ser-164. A disordered region spans residues 164 to 209; that stretch reads SPPYCSQGRQPTASSDLRMETTPSKALRSRLQEEGHSDRGSSGSVS. Positions 193 to 202 are enriched in basic and acidic residues; that stretch reads RLQEEGHSDR. Glycyl lysine isopeptide (Lys-Gly) (interchain with G-Cter in SUMO2) cross-links involve residues Lys-235 and Lys-237. The span at 236–245 shows a compositional bias: basic and acidic residues; the sequence is VKMEKSDRPS. Disordered stretches follow at residues 236–256 and 341–360; these read VKME…GDDG and SDSE…RERS. 2 C2H2-type zinc fingers span residues 372-394 and 400-422; these read LICI…MRLH and FVCK…IRGH. Lys-426 participates in a covalent cross-link: Glycyl lysine isopeptide (Lys-Gly) (interchain with G-Cter in SUMO2). The C2H2-type 3 zinc finger occupies 428-451; it reads FRCEICGKCFPFQGTLNQHLRKNH. A Phosphoserine modification is found at Ser-463. Residue Lys-474 forms a Glycyl lysine isopeptide (Lys-Gly) (interchain with G-Cter in SUMO2) linkage. The segment at 478-500 is disordered; sequence DASASEMGLDSRMEIHTVSDAPD.

In terms of tissue distribution, expressed in several tissues, including heart, brain, thymus, skeletal muscle, small intestine, testis, kidney, placenta, peripheral blood cells and adult and fetal liver.

It localises to the nucleus. Functionally, may be a transcriptional repressor. This Homo sapiens (Human) protein is Zinc finger and BTB domain-containing protein 34 (ZBTB34).